Here is an 892-residue protein sequence, read N- to C-terminus: Chromodomain-helicase-DNA-binding protein 3 (892 aa).

Residues 1 to 20 (MSSKRGADPDWKTPGKASKD) are compositionally biased toward basic and acidic residues. Residues 1–29 (MSSKRGADPDWKTPGKASKDKRPKTNAKK) are disordered. A PHD-type zinc finger spans residues 35 to 82 (EEYCKVCSDGGDLLCCDSCPSVYHRTCLSPPLKSIPKGDWICPRCIPL). Chromo domains follow at residues 84-156 (GKAE…PSLE) and 179-240 (LLVQ…GRQR). In terms of domain architecture, Helicase ATP-binding spans 279–458 (RYSWGQGIPT…FHLLNFLSSG (180 aa)). 292–299 (DEMGLGKT) provides a ligand contact to ATP. Residues 409–412 (DEAH) carry the DEAH box motif. The 150-residue stretch at 590–739 (LLSKMLKQLK…LTHLVVRPGM (150 aa)) folds into the Helicase C-terminal domain. Residues 839–892 (SQPKLPKKQKKQSQQSQVDVESIMGKGKRIRKEIDYSNQYPSPNRATPSSIVLM) form a disordered region. The segment covering 874–892 (YSNQYPSPNRATPSSIVLM) has biased composition (polar residues).

Belongs to the SNF2/RAD54 helicase family. As to quaternary structure, monomer.

The protein localises to the nucleus. The protein resides in the chromosome. It catalyses the reaction ATP + H2O = ADP + phosphate + H(+). Its activity is regulated as follows. ATPase activity is stimulated by binding to DNA or nucleosomes, but is strongly activated by nucleosomes. Its function is as follows. ATP-dependent chromatin-remodeling factor which acts in nucleosome-remodeling by catalyzing ATP-dependent nucleosome mobilization. Likely to be involved in the regulation of transcription. This is Chromodomain-helicase-DNA-binding protein 3 from Drosophila melanogaster (Fruit fly).